Reading from the N-terminus, the 184-residue chain is Ribosome-recycling factor (184 aa).

This sequence belongs to the RRF family.

It localises to the cytoplasm. Responsible for the release of ribosomes from messenger RNA at the termination of protein biosynthesis. May increase the efficiency of translation by recycling ribosomes from one round of translation to another. The sequence is that of Ribosome-recycling factor from Bifidobacterium adolescentis (strain ATCC 15703 / DSM 20083 / NCTC 11814 / E194a).